A 480-amino-acid chain; its full sequence is Cysteine--tRNA ligase (480 aa).

Cys-27 serves as a coordination point for Zn(2+). Positions 29 to 39 (PTVYNYAHIGN) match the 'HIGH' region motif. Zn(2+) is bound by residues Cys-221, His-246, and Glu-250. Residues 278 to 282 (KMSKS) carry the 'KMSKS' region motif. Lys-281 contacts ATP.

This sequence belongs to the class-I aminoacyl-tRNA synthetase family. As to quaternary structure, monomer. Requires Zn(2+) as cofactor.

It is found in the cytoplasm. The catalysed reaction is tRNA(Cys) + L-cysteine + ATP = L-cysteinyl-tRNA(Cys) + AMP + diphosphate. The sequence is that of Cysteine--tRNA ligase from Borreliella burgdorferi (strain ZS7) (Borrelia burgdorferi).